The sequence spans 231 residues: F-box protein SKIP8 (231 aa).

The segment at Met-1 to Thr-24 is disordered. Positions Val-34–Leu-80 constitute an F-box domain.

As to quaternary structure, part of a SCF (ASK-cullin-F-box) protein ligase complex. Interacts with SKP1A/ASK1.

It functions in the pathway protein modification; protein ubiquitination. In terms of biological role, component of SCF(ASK-cullin-F-box) E3 ubiquitin ligase complexes, which may mediate the ubiquitination and subsequent proteasomal degradation of target proteins. In Arabidopsis thaliana (Mouse-ear cress), this protein is F-box protein SKIP8 (SKIP8).